A 222-amino-acid chain; its full sequence is Small ribosomal subunit protein uS5 (222 aa).

The interval 1-41 (MAEQAGAGSAQDNRGGGRDDRGGRGRRDDRGGRGGRDDREK) is disordered. Over residues 15–41 (GGGRDDRGGRGRRDDRGGRGGRDDREK) the composition is skewed to basic and acidic residues. An S5 DRBM domain is found at 44–107 (YLERVVTINR…EEARKNFFRV (64 aa)).

It belongs to the universal ribosomal protein uS5 family. In terms of assembly, part of the 30S ribosomal subunit. Contacts proteins S4 and S8.

Functionally, with S4 and S12 plays an important role in translational accuracy. Its function is as follows. Located at the back of the 30S subunit body where it stabilizes the conformation of the head with respect to the body. The sequence is that of Small ribosomal subunit protein uS5 from Mycolicibacterium gilvum (strain PYR-GCK) (Mycobacterium gilvum (strain PYR-GCK)).